A 77-amino-acid polypeptide reads, in one-letter code: Acyl carrier protein (77 aa).

In terms of domain architecture, Carrier spans 1 to 76; that stretch reads MENFDKVKDI…DAVKFINSLE (76 aa). An O-(pantetheine 4'-phosphoryl)serine modification is found at Ser-36.

It belongs to the acyl carrier protein (ACP) family. In terms of processing, 4'-phosphopantetheine is transferred from CoA to a specific serine of apo-ACP by AcpS. This modification is essential for activity because fatty acids are bound in thioester linkage to the sulfhydryl of the prosthetic group.

The protein resides in the cytoplasm. Its pathway is lipid metabolism; fatty acid biosynthesis. Functionally, carrier of the growing fatty acid chain in fatty acid biosynthesis. The protein is Acyl carrier protein of Staphylococcus aureus (strain Mu3 / ATCC 700698).